Reading from the N-terminus, the 657-residue chain is Oleate activated transcription factor 3 (657 aa).

The zn(2)-C6 fungal-type DNA-binding region spans 21 to 48 (CLNCRRRKTKCDRGKPSCSNCLKLGETC).

The protein belongs to the OAF3 family.

The protein localises to the cytoplasm. The protein resides in the nucleus. Its subcellular location is the mitochondrion. Functionally, transcriptional inhibitor with a significantly increased number of target genes in response to oleate. This chain is Oleate activated transcription factor 3 (OAF3), found in Kluyveromyces lactis (strain ATCC 8585 / CBS 2359 / DSM 70799 / NBRC 1267 / NRRL Y-1140 / WM37) (Yeast).